Reading from the N-terminus, the 579-residue chain is MVSKIRTFGWVQNPGKFENLKRVVQVFDRNSKVHNEVKNIKIPTLVKESKIQKELVAIMNQHDLIYTYKELVGTGTSIRSEAPCDAIIQATIADQGNKKGYIDNWSSDGFLRWAHALGFIEYINKSDSFVITDVGLAYSKSADGSAIEKEILIEAISSYPPAIRILTLLEDGQHLTKFDLGKNLGFSGESGFTSLPEGILLDTLANAMPKDKGEIRNNWEGSSDKYARMIGGWLDKLGLVKQGKKEFIIPTLGKPDNKEFISHAFKITGEGLKVLRRAKGSTKFTRVPKRVYWEMLATNLTDKEYVRTRRALILEILIKAGSLKIEQIQDNLKKLGFDEVIETIENDIKGLINTGIFIEIKGRFYQLKDHILQFVIPNRGVTKQLVKSELEEKKSELRHKLKYVPHEYIELIEIARNSTQDRILEMKVMEFFMKVYGYRGKHLGGSRKPDGAIYTVGSPIDYGVIVDTKAYSGGYNLPIGQADEMQRYVEENQTRNKHINPNEWWKVYPSSVTEFKFLFVSGHFKGNYKAQLTRLNHITNCNGAVLSVEELLIGGEMIKAGTLTLEEVRRKFNNGEINF.

Catalysis depends on residues aspartate 450, aspartate 467, and lysine 469.

As to quaternary structure, monomer, in which form it can cleave DNA. Homodimer when bound to DNA. Mg(2+) is required as a cofactor.

The enzyme catalyses Endonucleolytic cleavage of DNA to give specific double-stranded fragments with terminal 5'-phosphates.. Functionally, an S subtype restriction enzyme that recognizes the asymmetric double-stranded sequence 5'-GGATG-3' and cleaves respectively 14 bases after G-1 (top strand) and 13 bases before C-1 (bottom strand). The protein is Type II restriction enzyme FokI of Planomicrobium okeanokoites (Planococcus okeanokoites).